The sequence spans 1812 residues: Protein virilizer homolog (1812 aa).

Ala2 carries the N-acetylalanine modification. 2 disordered regions span residues 132–302 and 576–596; these read ISHD…EQIS and KTSSLPNHSEPDHDTDAGLER. 2 positions are modified to phosphoserine: Ser133 and Ser138. Over residues 139–152 the composition is skewed to pro residues; the sequence is PPPPPPPPPPPQPQ. Residues 160-169 show a composition bias toward basic and acidic residues; it reads KHADGEKEDQ. A Phosphoserine modification is found at Ser173. Residues 174–190 show a composition bias toward pro residues; that stretch reads PPRPQPRGPRTPPGPPP. Phosphothreonine is present on Thr184. Position 222 is a phosphoserine (Ser222). The segment covering 224–233 has biased composition (polar residues); that stretch reads DRNSVPQEGQ. Composition is skewed to acidic residues over residues 234-266 and 274-302; these read YSDEGEVEEEQQEEGEEDEDDVDVEEEEDEDED and IPEEEEEDEEEEGEEDEEGEGDDGYEQIS. The span at 584 to 596 shows a compositional bias: basic and acidic residues; the sequence is SEPDHDTDAGLER. Tyr914 is subject to Phosphotyrosine. The residue at position 1579 (Ser1579) is a Phosphoserine. Disordered regions lie at residues 1616–1635 and 1663–1812; these read HVVPPPRGRGRGGFGQGIRP and KEVV…SFTR. Positions 1689–1698 are enriched in gly residues; the sequence is GFSGNRGGRG. The residue at position 1708 (Thr1708) is a Phosphothreonine. The residue at position 1723 (Arg1723) is an Omega-N-methylarginine. The segment covering 1723–1748 has biased composition (polar residues); sequence RGSSWSAQNTPRGNYNESRGGQSNFN. Asymmetric dimethylarginine; alternate is present on Arg1741. Arg1741 is subject to Omega-N-methylarginine; alternate. An asymmetric dimethylarginine mark is found at Arg1773, Arg1775, and Arg1793. The span at 1788–1802 shows a compositional bias: gly residues; sequence GSGGSRGKFVSGGSG. Basic residues predominate over residues 1803 to 1812; it reads RGRHVRSFTR.

This sequence belongs to the vir family. Component of the WMM complex, a N6-methyltransferase complex composed of a catalytic subcomplex, named MAC, and of an associated subcomplex, named MACOM. The MAC subcomplex is composed of METTL3 and METTL14. The MACOM subcomplex is composed of WTAP, ZC3H13, CBLL1/HAKAI, VIRMA, and, in some cases of RBM15 (RBM15 or RBM15B). Interacts with WTAP. Also a component of a MACOM-like complex, named WTAP complex, composed of WTAP, ZC3H13, CBLL1, VIRMA, RBM15, BCLAF1 and THRAP3. Interacts with NUDT21 and CPSF6.

It is found in the nucleus speckle. It localises to the nucleus. The protein localises to the nucleoplasm. The protein resides in the cytoplasm. Functionally, associated component of the WMM complex, a complex that mediates N6-methyladenosine (m6A) methylation of RNAs, a modification that plays a role in the efficiency of mRNA splicing and RNA processing. Acts as a key regulator of m6A methylation by promoting m6A methylation of mRNAs in the 3'-UTR near the stop codon: recruits the catalytic core components METTL3 and METTL14, thereby guiding m6A methylation at specific sites. Required for mRNA polyadenylation via its role in selective m6A methylation: m6A methylation of mRNAs in the 3'-UTR near the stop codon correlating with alternative polyadenylation (APA). The sequence is that of Protein virilizer homolog from Homo sapiens (Human).